Consider the following 369-residue polypeptide: Anhydro-N-acetylmuramic acid kinase (369 aa).

12–19 (GTSLDGVD) contacts ATP.

Belongs to the anhydro-N-acetylmuramic acid kinase family.

It catalyses the reaction 1,6-anhydro-N-acetyl-beta-muramate + ATP + H2O = N-acetyl-D-muramate 6-phosphate + ADP + H(+). It participates in amino-sugar metabolism; 1,6-anhydro-N-acetylmuramate degradation. Its pathway is cell wall biogenesis; peptidoglycan recycling. Its function is as follows. Catalyzes the specific phosphorylation of 1,6-anhydro-N-acetylmuramic acid (anhMurNAc) with the simultaneous cleavage of the 1,6-anhydro ring, generating MurNAc-6-P. Is required for the utilization of anhMurNAc either imported from the medium or derived from its own cell wall murein, and thus plays a role in cell wall recycling. This chain is Anhydro-N-acetylmuramic acid kinase, found in Escherichia coli O157:H7.